The sequence spans 392 residues: Stilbene synthase 6 (392 aa).

55–58 is a substrate binding site; the sequence is KFNR. Residue cysteine 164 is part of the active site. Residues leucine 267 and 305–307 contribute to the substrate site; that span reads GGP.

This sequence belongs to the thiolase-like superfamily. Chalcone/stilbene synthases family. In terms of assembly, homodimer.

The protein localises to the cytoplasm. It catalyses the reaction 4-coumaroyl-CoA + 3 malonyl-CoA + 3 H(+) = trans-resveratrol + 4 CO2 + 4 CoA. It participates in phytoalexin biosynthesis; 3,4',5-trihydroxystilbene biosynthesis; 3,4',5-trihydroxystilbene from trans-4-coumarate: step 2/2. Mediates resistance to pathogens which are sensitive to stilbenes. This chain is Stilbene synthase 6 (STS), found in Vitis vinifera (Grape).